The sequence spans 149 residues: MERTYLMIKPDGVQRGLVGEIISRFEKKGFKLVGMKFLRLTREMAEKHYAEHVGKPFFAGLVDYIISGPVVAMCWEGKDIVSVSREMMGATNPAKAAPGTIRGTYAVDIGRNIIHGSDSPASAERELAIYFQSDELVEWDRTLQGWLTE.

Lys9, Phe57, Arg85, Thr91, Arg102, and Asn112 together coordinate ATP. Catalysis depends on His115, which acts as the Pros-phosphohistidine intermediate.

This sequence belongs to the NDK family. Homotetramer. It depends on Mg(2+) as a cofactor.

It localises to the cytoplasm. The enzyme catalyses a 2'-deoxyribonucleoside 5'-diphosphate + ATP = a 2'-deoxyribonucleoside 5'-triphosphate + ADP. It catalyses the reaction a ribonucleoside 5'-diphosphate + ATP = a ribonucleoside 5'-triphosphate + ADP. Its function is as follows. Major role in the synthesis of nucleoside triphosphates other than ATP. The ATP gamma phosphate is transferred to the NDP beta phosphate via a ping-pong mechanism, using a phosphorylated active-site intermediate. The polypeptide is Nucleoside diphosphate kinase (Heliobacterium modesticaldum (strain ATCC 51547 / Ice1)).